Reading from the N-terminus, the 1322-residue chain is Ice nucleation protein InaA (1322 aa).

The segment at 162 to 1281 is octapeptide periodicity; that stretch reads ATYGSTLSGT…LTAGENSVLI (1120 aa). Polar residues-rich tracts occupy residues 271-302, 327-350, 373-398, and 423-446; these read SLTA…QKGS, TQTA…QKGS, and GSTQ…QKGS. 4 disordered regions span residues 271–303, 327–358, 372–399, and 423–448; these read SLTA…KGSD, TQTA…GYGS, YGST…KGSD, and TQTA…GSDL.

It belongs to the bacterial ice nucleation protein family.

The protein resides in the cell outer membrane. Functionally, ice nucleation proteins enable bacteria to nucleate crystallization in supercooled water. This is Ice nucleation protein InaA (inaA) from Pantoea ananas (Erwinia uredovora).